A 226-amino-acid chain; its full sequence is Ribose-5-phosphate isomerase A (226 aa).

Residues 26 to 29 (TGST), 82 to 85 (DGAD), and 95 to 98 (KGGG) each bind substrate. Glu-104 functions as the Proton acceptor in the catalytic mechanism. Residue Lys-122 coordinates substrate.

The protein belongs to the ribose 5-phosphate isomerase family. In terms of assembly, homodimer.

The catalysed reaction is aldehydo-D-ribose 5-phosphate = D-ribulose 5-phosphate. It participates in carbohydrate degradation; pentose phosphate pathway; D-ribose 5-phosphate from D-ribulose 5-phosphate (non-oxidative stage): step 1/1. In terms of biological role, catalyzes the reversible conversion of ribose-5-phosphate to ribulose 5-phosphate. The sequence is that of Ribose-5-phosphate isomerase A from Streptococcus thermophilus (strain ATCC BAA-250 / LMG 18311).